A 101-amino-acid polypeptide reads, in one-letter code: Small integral membrane protein 19 (101 aa).

A helical transmembrane segment spans residues 25 to 43; it reads ATNVYLIVILVSIGLFMYA.

The protein belongs to the SMIM19 family.

The protein resides in the membrane. This chain is Small integral membrane protein 19 (smim19), found in Xenopus tropicalis (Western clawed frog).